Reading from the N-terminus, the 360-residue chain is Peptide chain release factor 1 (360 aa).

Glutamine 235 carries the N5-methylglutamine modification.

Belongs to the prokaryotic/mitochondrial release factor family. Post-translationally, methylated by PrmC. Methylation increases the termination efficiency of RF1.

The protein localises to the cytoplasm. Peptide chain release factor 1 directs the termination of translation in response to the peptide chain termination codons UAG and UAA. The chain is Peptide chain release factor 1 from Burkholderia ambifaria (strain MC40-6).